The sequence spans 322 residues: Uridylate-specific endoribonuclease EndoU (322 aa).

The helical transmembrane segment at 25–45 (FVIVGLLITIGILSWHFYEYF) threads the bilayer. An EndoU domain is found at 53 to 322 (TPDDVLTLSK…LIGTVYPDSS (270 aa)). Residues histidine 200, histidine 215, and lysine 259 contribute to the active site.

Belongs to the ENDOU family. Monomer. It depends on Mn(2+) as a cofactor. Predominantly expressed in head.

It localises to the membrane. The catalysed reaction is a ribonucleotidyl-ribonucleotide-RNA = a 3'-end 2',3'-cyclophospho-ribonucleotide-RNA + a 5'-end dephospho-ribonucleoside-RNA. Endoribonuclease that cleaves single-stranded RNAs at uridylates and releases products that have 2'-3'-cyclic phosphate termini. Preferentially cleaves single stranded RNA at poly-U sites with CU, UC and AU sites cleaved less efficiently. May target mRNAs encoding proteins involved in lipid metabolism to regulate their expression. Regulates levels of TBPH protein, but not mRNA, by an as yet unknown mechanism. Important for neuronal development or function. The protein is Uridylate-specific endoribonuclease EndoU of Drosophila melanogaster (Fruit fly).